We begin with the raw amino-acid sequence, 166 residues long: MAEENQVAAPEEAQTPFELQIQRIYIKDVSFEAPNLPTIFHQEWKPQLGFELDTETKQLDEDLYEVVLHINVSTTLEDSGDTAFICEVKQAGVFTIKGIEGIQLAHCLASQCPNVLYPYARELISSLVNRGTFPALNLSPVNFDALFMDYLQRQEAEQNAEAPAVN.

It belongs to the SecB family. In terms of assembly, homotetramer, a dimer of dimers. One homotetramer interacts with 1 SecA dimer.

It is found in the cytoplasm. In terms of biological role, one of the proteins required for the normal export of preproteins out of the cell cytoplasm. It is a molecular chaperone that binds to a subset of precursor proteins, maintaining them in a translocation-competent state. It also specifically binds to its receptor SecA. This chain is Protein-export protein SecB, found in Actinobacillus pleuropneumoniae serotype 5b (strain L20).